Here is a 629-residue protein sequence, read N- to C-terminus: tRNA uridine 5-carboxymethylaminomethyl modification enzyme MnmG (629 aa).

FAD contacts are provided by residues Gly13–Gly18, Val125, and Ser180. Gly273 to Phe287 lines the NAD(+) pocket. An FAD-binding site is contributed by Gln370.

Belongs to the MnmG family. In terms of assembly, homodimer. Heterotetramer of two MnmE and two MnmG subunits. It depends on FAD as a cofactor.

The protein localises to the cytoplasm. In terms of biological role, NAD-binding protein involved in the addition of a carboxymethylaminomethyl (cmnm) group at the wobble position (U34) of certain tRNAs, forming tRNA-cmnm(5)s(2)U34. This is tRNA uridine 5-carboxymethylaminomethyl modification enzyme MnmG from Citrobacter koseri (strain ATCC BAA-895 / CDC 4225-83 / SGSC4696).